The following is an 844-amino-acid chain: MAGNDREPIGRKGKPTRPVKQKVSRRRYEDDDDYDDYDDYEDEEPMPRKGKGKGKGRKPRGKRGWLWLLLKLAIVFAVLIAIYGVYLDQKIRSRIDGKVWQLPAAVYGRMVNLEPDMTISKNEMVKLLEATQYRQVSKMTRPGEFTVQANSIEMIRRPFDFPDSKEGQVRARLTFDGDHLATIVNMENNRQFGFFRLDPRLITMISSPNGEQRLFVPRSGFPDLLVDTLLATEDRHFYEHDGISLYSIGRAVLANLTAGRTVQGASTLTQQLVKNLFLSSERSYWRKANEAYMALIMDARYSKDRILELYMNEVYLGQSGDNEIRGFPLASLYYFGRPVEELSLDQQALLVGMVKGASIYNPWRNPKLALERRNLVLRLLQQQQIIDQELYDMLSARPLGVQPRGGVISPQPAFMQLVRQELQAKLGDKVKDLSGVKIFTTFDSVAQDAAEKAAVEGIPALKKQRKLSDLETAIVVVDRFSGEVRAMVGGSEPQFAGYNRAMQARRSIGSLAKPATYLTALSQPKIYRLNTWIADAPIALRQPNGQVWSPQNDDRRYSESGRVMLVDALTRSMNVPTVNLGMALGLPAVTETWIKLGVPKDQLHPVPAMLLGALNLTPIEVAQAFQTIASGGNRAPLSALRSVIAEDGKVLYQSFPQAERAVPAQAAYLTLWTMQQVVQRGTGRQLGAKYPNLHLAGKTGTTNNNVDTWFAGIDGSTVTITWVGRDNNQPTKLYGASGAMSIYQRYLANQTPTPLNLVPPEDIADMGVDYDGNFVCSGGMRILPVWTSDPQSLCQQSEMQQQPSGNPFDQSSQPQQQPQQQPAQQEQKDSDGVAGWIKDMFGSN.

Residues 1–10 (MAGNDREPIG) are compositionally biased toward basic and acidic residues. Residues 1–60 (MAGNDREPIGRKGKPTRPVKQKVSRRRYEDDDDYDDYDDYEDEEPMPRKGKGKGKGRKPR) form a disordered region. The Cytoplasmic portion of the chain corresponds to 1 to 63 (MAGNDREPIG…GKGRKPRGKR (63 aa)). A compositionally biased stretch (basic residues) spans 11-25 (RKGKPTRPVKQKVSR). Positions 30–44 (DDDDYDDYDDYEDEE) are enriched in acidic residues. Residues 48–60 (RKGKGKGKGRKPR) show a composition bias toward basic residues. A helical; Signal-anchor for type II membrane protein membrane pass occupies residues 64–87 (GWLWLLLKLAIVFAVLIAIYGVYL). Residues 88–250 (DQKIRSRIDG…DGISLYSIGR (163 aa)) are membrane association. Over 88 to 844 (DQKIRSRIDG…GWIKDMFGSN (757 aa)) the chain is Periplasmic. Residues 109–200 (RMVNLEPDMT…QFGFFRLDPR (92 aa)) are uvrB domain 2 homolog. The interval 195 to 367 (FRLDPRLITM…SIYNPWRNPK (173 aa)) is transglycosylase. E233 acts as the Proton donor; for transglycosylase activity in catalysis. Residues 444–736 (SVAQDAAEKA…NNQPTKLYGA (293 aa)) are transpeptidase. S510 functions as the Acyl-ester intermediate; for transpeptidase activity in the catalytic mechanism. Residues 793 to 825 (LCQQSEMQQQPSGNPFDQSSQPQQQPQQQPAQQ) are compositionally biased toward low complexity. Residues 793–835 (LCQQSEMQQQPSGNPFDQSSQPQQQPQQQPAQQEQKDSDGVAG) are disordered.

It in the N-terminal section; belongs to the glycosyltransferase 51 family. In the C-terminal section; belongs to the transpeptidase family. As to quaternary structure, forms a trimeric complex with MipA and MltA. Has also been shown to exist as monomer or homodimer; homodimer of Alpha and Gamma isozymes can be found. Interacts with UvrA, FtsL and FtsN.

It localises to the cell inner membrane. The catalysed reaction is [GlcNAc-(1-&gt;4)-Mur2Ac(oyl-L-Ala-gamma-D-Glu-L-Lys-D-Ala-D-Ala)](n)-di-trans,octa-cis-undecaprenyl diphosphate + beta-D-GlcNAc-(1-&gt;4)-Mur2Ac(oyl-L-Ala-gamma-D-Glu-L-Lys-D-Ala-D-Ala)-di-trans,octa-cis-undecaprenyl diphosphate = [GlcNAc-(1-&gt;4)-Mur2Ac(oyl-L-Ala-gamma-D-Glu-L-Lys-D-Ala-D-Ala)](n+1)-di-trans,octa-cis-undecaprenyl diphosphate + di-trans,octa-cis-undecaprenyl diphosphate + H(+). It carries out the reaction Preferential cleavage: (Ac)2-L-Lys-D-Ala-|-D-Ala. Also transpeptidation of peptidyl-alanyl moieties that are N-acyl substituents of D-alanine.. It functions in the pathway cell wall biogenesis; peptidoglycan biosynthesis. Its function is as follows. Cell wall formation. Synthesis of cross-linked peptidoglycan from the lipid intermediates. The enzyme has a penicillin-insensitive transglycosylase N-terminal domain (formation of linear glycan strands) and a penicillin-sensitive transpeptidase C-terminal domain (cross-linking of the peptide subunits). This is Penicillin-binding protein 1B (mrcB) from Escherichia coli (strain K12).